Reading from the N-terminus, the 248-residue chain is 3-deoxy-manno-octulosonate cytidylyltransferase (248 aa).

It belongs to the KdsB family.

The protein localises to the cytoplasm. It catalyses the reaction 3-deoxy-alpha-D-manno-oct-2-ulosonate + CTP = CMP-3-deoxy-beta-D-manno-octulosonate + diphosphate. Its pathway is nucleotide-sugar biosynthesis; CMP-3-deoxy-D-manno-octulosonate biosynthesis; CMP-3-deoxy-D-manno-octulosonate from 3-deoxy-D-manno-octulosonate and CTP: step 1/1. The protein operates within bacterial outer membrane biogenesis; lipopolysaccharide biosynthesis. Activates KDO (a required 8-carbon sugar) for incorporation into bacterial lipopolysaccharide in Gram-negative bacteria. In Escherichia coli (strain K12 / MC4100 / BW2952), this protein is 3-deoxy-manno-octulosonate cytidylyltransferase.